A 431-amino-acid polypeptide reads, in one-letter code: Mitochondrial inner membrane protein OXA1-like (431 aa).

Residues 1–22 (MATCLRGITKRVNLLQRRVYPS) constitute a mitochondrion transit peptide. The next 5 helical transmembrane spans lie at 119–139 (VVPA…PVAA), 155–175 (WWAS…PILL), 227–247 (FTPL…FFAI), 269–289 (TTTD…LIMV), and 312–332 (IIAF…FCYW). The tract at residues 362 to 414 (NSSTRQPSPSSPLPFSFAEPKDQSVVAQEKPPMSSESSSSVPDRRISRSSVLN) is disordered. Residues 392–402 (PPMSSESSSSV) are compositionally biased toward low complexity.

It belongs to the OXA1/ALB3/YidC (TC 2.A.9.2) family.

It localises to the mitochondrion inner membrane. Probably required for the insertion of integral membrane proteins into the mitochondrial inner membrane. May participate in the activity and assembly of cytochrome oxidase. This is Mitochondrial inner membrane protein OXA1-like (OXA1L) from Arabidopsis thaliana (Mouse-ear cress).